The following is a 282-amino-acid chain: MAGAGLIGIRRRIKSVTNIRKITKAMGLVSTAKLRKARVNLEINKKYYNEYKIILKDIINFIEDRNIYIDGNGSHKKLYVIFTSDSGLCGSFNINIINNVINEIKEDKENSLVIVIGQKGRMYLKKLGINTLAEYIEIPDVPTTKEARTIAKNIIKLYSSKEVGEVFLVYSEFYSPVKQQVLINKILPFTKENKSDNKYIEFNPPVTRFMDEILENYLKATILNCFSNSKASENGSRMTAMNGATDNANDLLDNLDLQFNRLRQSAITQEISEIVGGAEAQR.

This sequence belongs to the ATPase gamma chain family. F-type ATPases have 2 components, CF(1) - the catalytic core - and CF(0) - the membrane proton channel. CF(1) has five subunits: alpha(3), beta(3), gamma(1), delta(1), epsilon(1). CF(0) has three main subunits: a, b and c.

The protein localises to the cell membrane. Produces ATP from ADP in the presence of a proton gradient across the membrane. The gamma chain is believed to be important in regulating ATPase activity and the flow of protons through the CF(0) complex. This chain is ATP synthase gamma chain, found in Clostridium botulinum (strain 657 / Type Ba4).